Reading from the N-terminus, the 1286-residue chain is Autotransporter adhesin AIDA-I (1286 aa).

Positions 1 to 49 are cleaved as a signal peptide; it reads MNKAYSIIWSHSRQAWIVASELARGHGFVLAKNTLLVLAVVSTIGNAFA. O-alpha-linked (glycero-D-manno-heptose) serine glycans are attached at residues Ser102, Ser111, and Ser116. O-alpha-linked (glycero-D-manno-heptose) threonine glycosylation occurs at Thr154. Ser242, Ser252, Ser334, Ser391, Ser409, Ser539, Ser545, Ser558, Ser569, Ser576, Ser577, and Ser582 each carry an O-alpha-linked (glycero-D-manno-heptose) serine glycan. The Autotransporter domain maps to 998-1286; that stretch reads TQPESASVWM…SGALGIKYSF (289 aa). A beta stranded membrane pass occupies residues 1006-1012; the sequence is WMKITGG. The Extracellular segment spans residues 1013-1029; it reads ISSGKLNDGQNKTTTNQ. The chain crosses the membrane as a beta stranded span at residues 1030-1040; that stretch reads FINQLGGDIYK. Over 1041-1047 the chain is Periplasmic; the sequence is FHAEQLG. The beta stranded transmembrane segment at 1048–1058 threads the bilayer; it reads DFTLGIMGGYA. The Extracellular portion of the chain corresponds to 1059–1079; that stretch reads NAKGKTINYTSNKAARNTLDG. A beta stranded membrane pass occupies residues 1080-1087; sequence YSVGVYGT. Residues 1088–1097 are Periplasmic-facing; it reads WYQNGENATG. The chain crosses the membrane as a beta stranded span at residues 1098–1108; sequence LFAETWMQYNW. Residues 1109–1126 are Extracellular-facing; the sequence is FNASVKGDGLEEEKYNLN. A beta stranded transmembrane segment spans residues 1127–1138; that stretch reads GLTASAGGGYNL. At 1139 to 1152 the chain is on the periplasmic side; it reads NVHTWTSPEGITGE. The chain crosses the membrane as a beta stranded span at residues 1153–1164; it reads FWLQPHLQAVWM. Over 1165–1186 the chain is Extracellular; it reads GVTPDTHQEDNGTVVQGAGKNN. A beta stranded transmembrane segment spans residues 1187 to 1198; the sequence is IQTKAGIRASWK. Over 1199–1210 the chain is Periplasmic; that stretch reads VKSTLDKDTGRR. A beta stranded transmembrane segment spans residues 1211–1221; sequence FRPYIEANWIH. The Extracellular portion of the chain corresponds to 1222 to 1242; the sequence is NTHEFGVKMSDDSQLLSGSRN. Residues 1243–1253 form a beta stranded membrane-spanning segment; it reads QGEIKTGIEGV. The Periplasmic portion of the chain corresponds to 1254 to 1259; that stretch reads ITQNLS. The beta stranded transmembrane segment at 1260 to 1267 threads the bilayer; the sequence is VNGGVAYQ. Residues 1268–1275 lie on the Extracellular side of the membrane; sequence AGGHGSNA. Residues 1276 to 1284 traverse the membrane as a beta stranded segment; it reads ISGALGIKY. The Periplasmic portion of the chain corresponds to 1285–1286; that stretch reads SF.

Intercellular AIDA-AIDA interaction is responsible for bacterial autoaggregation. AIDA can also interact with antigen 43 (Ag43), and the resultant intercellular AIDA-Ag43 interaction causes cell aggregation. Glycosylated on serine residues by AHH and AAH2 in the cytoplasm. Glycosylated with an average of 19 heptose residues. Glycosylated with either ADP-L, D-heptose or ADP-D, D-heptose. Glycosylation is required for protein folding/stabilization and resistance to protease-mediated degradation. Glycosylation is required for bacteria adhesion to mammalian cells. Glycosylation is dispensable for cell outer membrane localization. Glycosylation is dispensable for AIDA-mediated cell-cell aggregation and induction of biofilm formation. Glycosylation is dispensable for interaction with Ag43.

Its subcellular location is the periplasm. The protein localises to the secreted. It is found in the cell surface. The protein resides in the cell outer membrane. In terms of biological role, potent bacterial adhesin that mediates bacterial attachment to a broad variety of human and other mammalian cells. Has additional virulence properties, as it is capable of mediating bacterial autoaggregation via intercellular self-recognition and it is a highly efficient initiator of biofilm formation. This Escherichia coli protein is Autotransporter adhesin AIDA-I (aidA).